The primary structure comprises 694 residues: Follicle-stimulating hormone receptor (694 aa).

An N-terminal signal peptide occupies residues 1–17 (MALLLVSLLAFLSLGSG). 2 disulfide bridges follow: C18-C25 and C23-C32. In terms of domain architecture, LRRNT spans 18–46 (CHHRVCHCSNRVFLCQESKVTEIPSDLPR). Over 18 to 365 (CHHRVCHCSN…EDIMGYDILR (348 aa)) the chain is Extracellular. LRR repeat units lie at residues 49-72 (LELRFVLTKLRVIPKGAFSGFGDL), 73-97 (EKIEISQNDVLEVIEANVFSNLPKL), 98-118 (HEIRIEKANNLLYIDHDAFQN), 119-143 (LPNLQYLLISNTGIKHLPAVHKIQS), 144-169 (LQKVLLDIQDNINIHTVERNSFMGLS), 170-192 (FESTILRLSKNGIQEIHNCAFNG), 193-216 (TQLDELNLSYNNNLEELPNDVFQG), 217-240 (ASGPVILDISGTRIHSLPNYGLEN), and 241-259 (LKKLRARSTYNLKKLPSLE). N-linked (GlcNAc...) asparagine glycosylation is found at N191 and N199. N268 carries an N-linked (GlcNAc...) asparagine glycan. Cystine bridges form between C275–C345, C276–C292, C276–C355, and C292–C337. The N-linked (GlcNAc...) asparagine glycan is linked to N293. Y334 carries the sulfotyrosine modification. The helical transmembrane segment at 366 to 386 (VLIWFISILAITGNIIVLVIL) threads the bilayer. The Cytoplasmic segment spans residues 387–397 (ITSQYKLTVPR). Residues 398–420 (FLMCNLAFADLCIGIYLLLIASV) traverse the membrane as a helical segment. Residues 421–442 (DIHTKSQYHNYAIDWQTGAGCD) lie on the Extracellular side of the membrane. C441 and C516 are oxidised to a cystine. A helical transmembrane segment spans residues 443–464 (AAGFFTVFASELSVYTLTAITL). At 465 to 484 (ERWHTITHAMQLECKVQLRH) the chain is on the cytoplasmic side. The helical transmembrane segment at 485 to 507 (AASVMLVGWIFAFAVALLPIFGI) threads the bilayer. Residues 508–527 (STYMKVSICLPMDIDSPLSQ) lie on the Extracellular side of the membrane. A helical transmembrane segment spans residues 528–549 (LYVMSLLVLNVLAFVVICGCYI). Residues 550 to 572 (HIYLTVRNPNIVSSSSDTKIAKR) are Cytoplasmic-facing. The helical transmembrane segment at 573-596 (MAILIFTDFLCMAPISFFAISASL) threads the bilayer. The Extracellular segment spans residues 597-607 (KVPLITVSKSK). Residues 608-629 (ILLVLFYPINSCANPFLYAIFT) traverse the membrane as a helical segment. Topologically, residues 630 to 694 (KNFRRDFFIL…LVPLSHLAQN (65 aa)) are cytoplasmic.

This sequence belongs to the G-protein coupled receptor 1 family. FSH/LSH/TSH subfamily. In terms of assembly, homotrimer. Functions as a homotrimer binding the FSH hormone heterodimer composed of CGA and FSHB. Interacts with ARRB2. Interacts with APPL2; interaction is independent of follicle stimulating hormone stimulation. N-glycosylated; indirectly required for FSH-binding, possibly via a conformational change that allows high affinity binding of hormone. In terms of processing, sulfated.

Its subcellular location is the cell membrane. Its function is as follows. G protein-coupled receptor for follitropin, the follicle-stimulating hormone. Through cAMP production activates the downstream PI3K-AKT and ERK1/ERK2 signaling pathways. This is Follicle-stimulating hormone receptor (FSHR) from Equus caballus (Horse).